The chain runs to 158 residues: Disease resistance response protein DRRG49-C (158 aa).

It belongs to the BetVI family.

In Pisum sativum (Garden pea), this protein is Disease resistance response protein DRRG49-C.